The following is a 443-amino-acid chain: ATP-dependent protease ATPase subunit HslU (443 aa).

Residues Ile18, 60–65 (GVGKTE), Asp256, Glu321, and Arg393 each bind ATP.

Belongs to the ClpX chaperone family. HslU subfamily. In terms of assembly, a double ring-shaped homohexamer of HslV is capped on each side by a ring-shaped HslU homohexamer. The assembly of the HslU/HslV complex is dependent on binding of ATP.

Its subcellular location is the cytoplasm. ATPase subunit of a proteasome-like degradation complex; this subunit has chaperone activity. The binding of ATP and its subsequent hydrolysis by HslU are essential for unfolding of protein substrates subsequently hydrolyzed by HslV. HslU recognizes the N-terminal part of its protein substrates and unfolds these before they are guided to HslV for hydrolysis. In Escherichia coli O17:K52:H18 (strain UMN026 / ExPEC), this protein is ATP-dependent protease ATPase subunit HslU.